We begin with the raw amino-acid sequence, 185 residues long: Ribosome-recycling factor (185 aa).

This sequence belongs to the RRF family.

It is found in the cytoplasm. Its function is as follows. Responsible for the release of ribosomes from messenger RNA at the termination of protein biosynthesis. May increase the efficiency of translation by recycling ribosomes from one round of translation to another. The sequence is that of Ribosome-recycling factor from Aeromonas salmonicida (strain A449).